A 196-amino-acid chain; its full sequence is Somatotropin (196 aa).

Residues 1–16 (MDKVILVLLMSLGASS) form the signal peptide. Position 17 is a pyrrolidone carboxylic acid (Q17). H35 contributes to the Zn(2+) binding site. Cysteines 67 and 169 form a disulfide. E178 serves as a coordination point for Zn(2+). C186 and C194 are disulfide-bonded.

Belongs to the somatotropin/prolactin family.

It localises to the secreted. Its function is as follows. Growth hormone plays an important role in growth control and is involved in the regulation of several anabolic processes. Implicated as an osmoregulatory substance important for seawater adaptation. The sequence is that of Somatotropin (gh) from Takifugu rubripes (Japanese pufferfish).